Consider the following 633-residue polypeptide: 1-deoxy-D-xylulose-5-phosphate synthase (633 aa).

Thiamine diphosphate is bound by residues histidine 72 and 113–115 (GHS). Residue aspartate 144 coordinates Mg(2+). Thiamine diphosphate contacts are provided by residues 145–146 (GA), asparagine 173, tyrosine 284, and glutamate 367. Asparagine 173 lines the Mg(2+) pocket.

This sequence belongs to the transketolase family. DXPS subfamily. In terms of assembly, homodimer. Mg(2+) is required as a cofactor. Thiamine diphosphate serves as cofactor.

It carries out the reaction D-glyceraldehyde 3-phosphate + pyruvate + H(+) = 1-deoxy-D-xylulose 5-phosphate + CO2. It participates in metabolic intermediate biosynthesis; 1-deoxy-D-xylulose 5-phosphate biosynthesis; 1-deoxy-D-xylulose 5-phosphate from D-glyceraldehyde 3-phosphate and pyruvate: step 1/1. Its function is as follows. Catalyzes the acyloin condensation reaction between C atoms 2 and 3 of pyruvate and glyceraldehyde 3-phosphate to yield 1-deoxy-D-xylulose-5-phosphate (DXP). This chain is 1-deoxy-D-xylulose-5-phosphate synthase, found in Bacillus licheniformis (strain ATCC 14580 / DSM 13 / JCM 2505 / CCUG 7422 / NBRC 12200 / NCIMB 9375 / NCTC 10341 / NRRL NRS-1264 / Gibson 46).